We begin with the raw amino-acid sequence, 902 residues long: Protein translocase subunit SecA (902 aa).

ATP is bound by residues glutamine 87, 105-109 (GEGKT), and aspartate 512. 2 disordered regions span residues 565 to 584 (RRID…PGSS) and 840 to 902 (VEEQ…GKLK). Basic and acidic residues-rich tracts occupy residues 840-859 (VEEQ…HEDA) and 873-882 (QVREGAKVGR). Zn(2+) is bound by residues cysteine 886, cysteine 888, cysteine 897, and histidine 898. The segment covering 892–902 (KKYKQCHGKLK) has biased composition (basic residues).

This sequence belongs to the SecA family. Monomer and homodimer. Part of the essential Sec protein translocation apparatus which comprises SecA, SecYEG and auxiliary proteins SecDF-YajC and YidC. Requires Zn(2+) as cofactor.

It is found in the cell inner membrane. Its subcellular location is the cytoplasm. It carries out the reaction ATP + H2O + cellular proteinSide 1 = ADP + phosphate + cellular proteinSide 2.. Functionally, part of the Sec protein translocase complex. Interacts with the SecYEG preprotein conducting channel. Has a central role in coupling the hydrolysis of ATP to the transfer of proteins into and across the cell membrane, serving both as a receptor for the preprotein-SecB complex and as an ATP-driven molecular motor driving the stepwise translocation of polypeptide chains across the membrane. The polypeptide is Protein translocase subunit SecA (Alteromonas mediterranea (strain DSM 17117 / CIP 110805 / LMG 28347 / Deep ecotype)).